A 493-amino-acid polypeptide reads, in one-letter code: Glutamyl-tRNA(Gln) amidotransferase subunit A (493 aa).

Catalysis depends on charge relay system residues Lys-81 and Ser-156. Ser-180 acts as the Acyl-ester intermediate in catalysis.

This sequence belongs to the amidase family. GatA subfamily. Heterotrimer of A, B and C subunits.

The enzyme catalyses L-glutamyl-tRNA(Gln) + L-glutamine + ATP + H2O = L-glutaminyl-tRNA(Gln) + L-glutamate + ADP + phosphate + H(+). Functionally, allows the formation of correctly charged Gln-tRNA(Gln) through the transamidation of misacylated Glu-tRNA(Gln) in organisms which lack glutaminyl-tRNA synthetase. The reaction takes place in the presence of glutamine and ATP through an activated gamma-phospho-Glu-tRNA(Gln). The protein is Glutamyl-tRNA(Gln) amidotransferase subunit A of Mycolicibacterium paratuberculosis (strain ATCC BAA-968 / K-10) (Mycobacterium paratuberculosis).